Reading from the N-terminus, the 257-residue chain is MLLGVNIDHIAVLRQARMVNDPDLLEAAFIVARHGDQITLHVREDRRHAQDFDLENIIKFCKSPVNLECALNDEILNLALKLKPHRVTLVPEKREELTTEGGLCLNHAKLKQSIEKLQNANIEVSLFINPSLEDIEKSKILKAQFIELHTGHYANLHNALFSNISHTAFALKELDQDKKTLQAQFEKELQNLELCAKKGLELGLKVAAGHGLNYKNVKPVVKIKEICELNIGQSIVARSVFTGLQNAILEMKELIKR.

Asn-6 contacts 3-amino-2-oxopropyl phosphate. 8–9 is a 1-deoxy-D-xylulose 5-phosphate binding site; the sequence is DH. Residue Arg-17 coordinates 3-amino-2-oxopropyl phosphate. Catalysis depends on His-41, which acts as the Proton acceptor. 1-deoxy-D-xylulose 5-phosphate is bound by residues Arg-43 and His-48. The active-site Proton acceptor is Glu-68. Thr-98 is a binding site for 1-deoxy-D-xylulose 5-phosphate. His-210 serves as the catalytic Proton donor. 3-amino-2-oxopropyl phosphate contacts are provided by residues Gly-211 and 232 to 233; that span reads GQ.

It belongs to the PNP synthase family. In terms of assembly, homooctamer; tetramer of dimers.

The protein localises to the cytoplasm. The catalysed reaction is 3-amino-2-oxopropyl phosphate + 1-deoxy-D-xylulose 5-phosphate = pyridoxine 5'-phosphate + phosphate + 2 H2O + H(+). It functions in the pathway cofactor biosynthesis; pyridoxine 5'-phosphate biosynthesis; pyridoxine 5'-phosphate from D-erythrose 4-phosphate: step 5/5. Catalyzes the complicated ring closure reaction between the two acyclic compounds 1-deoxy-D-xylulose-5-phosphate (DXP) and 3-amino-2-oxopropyl phosphate (1-amino-acetone-3-phosphate or AAP) to form pyridoxine 5'-phosphate (PNP) and inorganic phosphate. The chain is Pyridoxine 5'-phosphate synthase from Campylobacter jejuni subsp. jejuni serotype O:2 (strain ATCC 700819 / NCTC 11168).